A 182-amino-acid chain; its full sequence is Large ribosomal subunit protein uL6 (182 aa).

This sequence belongs to the universal ribosomal protein uL6 family. In terms of assembly, part of the 50S ribosomal subunit.

Functionally, this protein binds to the 23S rRNA, and is important in its secondary structure. It is located near the subunit interface in the base of the L7/L12 stalk, and near the tRNA binding site of the peptidyltransferase center. In Nostoc sp. (strain PCC 7120 / SAG 25.82 / UTEX 2576), this protein is Large ribosomal subunit protein uL6.